A 429-amino-acid chain; its full sequence is Saccharopine dehydrogenase-like oxidoreductase (429 aa).

Position 2 is an N-acetylalanine (alanine 2). Phosphoserine is present on serine 217.

The protein belongs to the saccharopine dehydrogenase family.

This Homo sapiens (Human) protein is Saccharopine dehydrogenase-like oxidoreductase (SCCPDH).